Here is a 344-residue protein sequence, read N- to C-terminus: Signal peptide peptidase (344 aa).

Residues 1-11 (MKNCERFANLA) lie on the Lumenal side of the membrane. The helical transmembrane segment at 12–32 (LAGLTLAPLVVRVNPNLNVIL) threads the bilayer. Over 33–62 (TACITVYVGCFRSVKDTPPTETMSKEHAMR) the chain is Cytoplasmic. The helical transmembrane segment at 63–83 (FPLVGSAMLLSLFLLFKFLSK) threads the bilayer. Residues 84–89 (DLVNAV) are Lumenal-facing. Residues 90-110 (LTAYFFVLGIVALSATLLPAI) traverse the membrane as a helical segment. The Cytoplasmic segment spans residues 111-136 (RRFLPNPWNDNLIVWRFPYFKSLEVE). A helical transmembrane segment spans residues 137-157 (FTKSQVVAGIPGTFFCAWYAW). Residues 158–160 (KKH) lie on the Lumenal side of the membrane. The chain crosses the membrane as a helical span at residues 161-181 (WLANNILGLSFCIQGIEMLSL). Residues 182–188 (GSFKTGA) are Cytoplasmic-facing. The helical transmembrane segment at 189-209 (ILLAGLFFYDIFWVFFTPVMV) threads the bilayer. The active site involves D198. The Lumenal portion of the chain corresponds to 210 to 230 (SVAKSFDAPIKLLFPTGDALR). A helical transmembrane segment spans residues 231-251 (PYSMLGLGDIVIPGIFVALAL). The active site involves D239. Residues 252-263 (RFDVSRRRQPQY) are Cytoplasmic-facing. Residues 264–284 (FTSAFIGYAVGVILTIVVMNW) traverse the membrane as a helical segment. Over 285–290 (FQAAQP) the chain is Lumenal. The short motif at 290-292 (PAL) is the PAL element. The chain crosses the membrane as a helical span at residues 291-311 (ALLYIVPAVIGFLASHCIWNG). At 312 to 344 (DIKPLLAFDESKTEEATTDESKTSEEVNKAHDE) the chain is on the cytoplasmic side. Positions 323-344 (KTEEATTDESKTSEEVNKAHDE) are disordered.

It belongs to the peptidase A22B family. In terms of tissue distribution, ubiquitous with the highest expression in emerging leaves, roots, and floral tissues (at the protein level). Highly detected in pollen.

The protein resides in the endoplasmic reticulum membrane. In terms of biological role, intramembrane-cleaving aspartic protease (I-CLiP) that cleaves type II membrane signal peptides in the hydrophobic plane of the membrane. Catalyzes intramembrane proteolysis of some signal peptides after they have been cleaved from a preprotein, resulting in the release of the fragment from the ER membrane into the cytoplasm. Plays a critical role in the development and function of the reproductive tissues, especially in pollen development. The polypeptide is Signal peptide peptidase (SPP) (Arabidopsis thaliana (Mouse-ear cress)).